Consider the following 369-residue polypeptide: 3-isopropylmalate dehydrogenase (369 aa).

77-90 (GPKWDDLPFDKKPE) contributes to the NAD(+) binding site. Residues Arg-97, Arg-107, Arg-135, and Asp-226 each coordinate substrate. Residues Asp-226, Asp-250, and Asp-254 each contribute to the Mg(2+) site. Position 289-301 (289-301 (GSAPDIAGKDMAN)) interacts with NAD(+).

Belongs to the isocitrate and isopropylmalate dehydrogenases family. LeuB type 1 subfamily. Homodimer. Mg(2+) serves as cofactor. It depends on Mn(2+) as a cofactor.

It is found in the cytoplasm. It catalyses the reaction (2R,3S)-3-isopropylmalate + NAD(+) = 4-methyl-2-oxopentanoate + CO2 + NADH. It functions in the pathway amino-acid biosynthesis; L-leucine biosynthesis; L-leucine from 3-methyl-2-oxobutanoate: step 3/4. Functionally, catalyzes the oxidation of 3-carboxy-2-hydroxy-4-methylpentanoate (3-isopropylmalate) to 3-carboxy-4-methyl-2-oxopentanoate. The product decarboxylates to 4-methyl-2 oxopentanoate. The polypeptide is 3-isopropylmalate dehydrogenase (Paramagnetospirillum magneticum (strain ATCC 700264 / AMB-1) (Magnetospirillum magneticum)).